The following is a 278-amino-acid chain: HTH-type transcriptional activator RhaS (278 aa).

The region spanning 174 to 272 is the HTH araC/xylS-type domain; the sequence is NQLMAWLEDH…NWSPRDIRQG (99 aa). 2 DNA-binding regions (H-T-H motif) span residues 191 to 212 and 239 to 262; these read EAVA…KQHT and VTEI…RREF.

As to quaternary structure, binds DNA as a dimer.

The protein localises to the cytoplasm. Functionally, activates expression of the rhaBAD and rhaT operons. This Salmonella enteritidis PT4 (strain P125109) protein is HTH-type transcriptional activator RhaS.